Reading from the N-terminus, the 318-residue chain is Small ribosomal subunit protein uS2 (318 aa).

Belongs to the universal ribosomal protein uS2 family.

This Mesomycoplasma hyopneumoniae (strain J / ATCC 25934 / NCTC 10110) (Mycoplasma hyopneumoniae) protein is Small ribosomal subunit protein uS2.